The sequence spans 151 residues: RNA polymerase-binding transcription factor DksA (151 aa).

Positions 114, 117, 135, and 138 each coordinate Zn(2+). The dksA C4-type zinc finger occupies 114-138 (CNSCSVEIGIRRLEARPTADLCIDC).

This sequence belongs to the DksA family. As to quaternary structure, interacts directly with the RNA polymerase.

It localises to the cytoplasm. Functionally, transcription factor that acts by binding directly to the RNA polymerase (RNAP). Required for negative regulation of rRNA expression and positive regulation of several amino acid biosynthesis promoters. Also required for regulation of fis expression. The protein is RNA polymerase-binding transcription factor DksA of Buchnera aphidicola subsp. Acyrthosiphon pisum (strain APS) (Acyrthosiphon pisum symbiotic bacterium).